A 922-amino-acid polypeptide reads, in one-letter code: MAGKLRVHELAKELGVTSKELLATLKEQGEFVKTASSTVQPPVVKKMKKHYGVGEESAKESATTPSPAAKPGPKPAAKAAPKAAAKPGPKPGPKPGPQPVKNTNPVAGAGTRPTSTVKPGEKPAPKPGAKPAPKTAAKPTPKPGAKPGPKPGGAKPGAKPGPKPGGRAPRVANNPFSSGAPAERPAPRPRGGQAGPGDMPRPGSRPGGAKKAGPKPGGAKQGGGRRPSPAMMPSHPNPAQMPSKSDNFGGGRGRGGRHGGPGGPGGPGGPGGPRGGRGGRRGGTAGAFGRPGGAPRKGRKSKRQKRNEYEAMQAPSVVGGVKLPNGKGAKIRLARGASLMDFAEKIKADAAALVQALFNLGEMVTATQSVSDETLMLLGEEMDYKVEVVSPEDEDRELLESFDLQFGEDEGEDEDLAQRPPVVTVMGHVDHGKTRLLDTIRKANVGSGEAGGITQHIGAYQVSVSMEGEDRLVTFLDTPGHEAFTAMRARGAKSTDIAILVVAADDGVMPQTVEAINHAKAADIPVVVAVNKIDKEGAQPDKIRGQLTEYGLIPEEYGGETMFVDISAKQGTNIDQLLESVLLTADASLDLRANPDMDAQGVAIEAHLDRGRGPVATIIVQRGTLRVGDSIVVGDAYGRVRRMIDEHGNDVQEAGPSRPVQVLGLTSVSGAGDNLLVVDEDRTARQIADRRDARRRNALAARSRKRVSLEDLDSVLKETNTLNLILKGDNAGTVEALEDALLKIEVDDEVDLNIIDRGVGAVTETNVNLAAASDAVIIGFNVRAEGKATEVANAEGVDIRYYSIIYKAIEEVEAALKGMLKPIYEEKQIGTAEIRQIFKASSVGLIAGCMVETGKVRRNAQARLVRDGNVVAEKTTIESLRREKDDVTEVSAGYECGMVLSYPDIQVDDIIEVFELVEVPRT.

Positions 33 to 310 (KTASSTVQPP…SKRQKRNEYE (278 aa)) are disordered. Over residues 75–87 (PAAKAAPKAAAKP) the composition is skewed to low complexity. Pro residues-rich tracts occupy residues 88 to 98 (GPKPGPKPGPQ) and 140 to 150 (TPKPGAKPGPK). Low complexity-rich tracts occupy residues 151–169 (PGGA…GRAP) and 202–211 (PGSRPGGAKK). Gly residues-rich tracts occupy residues 215–225 (KPGGAKQGGGR) and 248–292 (FGGG…GRPG). The segment covering 296–305 (RKGRKSKRQK) has biased composition (basic residues). In terms of domain architecture, tr-type G spans 418–590 (QRPPVVTVMG…VLLTADASLD (173 aa)). The G1 stretch occupies residues 427–434 (GHVDHGKT). GTP is bound at residue 427–434 (GHVDHGKT). The G2 stretch occupies residues 452-456 (GITQH). Positions 477–480 (DTPG) are G3. Residues 477 to 481 (DTPGH) and 531 to 534 (NKID) each bind GTP. Residues 531–534 (NKID) form a G4 region. The interval 567–569 (SAK) is G5.

The protein belongs to the TRAFAC class translation factor GTPase superfamily. Classic translation factor GTPase family. IF-2 subfamily.

Its subcellular location is the cytoplasm. In terms of biological role, one of the essential components for the initiation of protein synthesis. Protects formylmethionyl-tRNA from spontaneous hydrolysis and promotes its binding to the 30S ribosomal subunits. Also involved in the hydrolysis of GTP during the formation of the 70S ribosomal complex. This Corynebacterium jeikeium (strain K411) protein is Translation initiation factor IF-2.